Consider the following 299-residue polypeptide: ATP phosphoribosyltransferase (299 aa).

The protein belongs to the ATP phosphoribosyltransferase family. Long subfamily. As to quaternary structure, equilibrium between an active dimeric form, an inactive hexameric form and higher aggregates. Interconversion between the various forms is largely reversible and is influenced by the natural substrates and inhibitors of the enzyme. It depends on Mg(2+) as a cofactor.

The protein localises to the cytoplasm. It catalyses the reaction 1-(5-phospho-beta-D-ribosyl)-ATP + diphosphate = 5-phospho-alpha-D-ribose 1-diphosphate + ATP. Its pathway is amino-acid biosynthesis; L-histidine biosynthesis; L-histidine from 5-phospho-alpha-D-ribose 1-diphosphate: step 1/9. Feedback inhibited by histidine. In terms of biological role, catalyzes the condensation of ATP and 5-phosphoribose 1-diphosphate to form N'-(5'-phosphoribosyl)-ATP (PR-ATP). Has a crucial role in the pathway because the rate of histidine biosynthesis seems to be controlled primarily by regulation of HisG enzymatic activity. The protein is ATP phosphoribosyltransferase of Escherichia coli O7:K1 (strain IAI39 / ExPEC).